The sequence spans 377 residues: Caspase-4 (377 aa).

The required for LPS-binding stretch occupies residues 1–59; the sequence is MAEDKHNKNPLKMLESLGKELISGLLDDFVEKNVLKLEEEEKKKIYDAKLQDKARVLVD. Residues 1–80 constitute a propeptide that is removed on maturation; it reads MAEDKHNKNP…VFVQTFLNID (80 aa). Residues 1–91 form the CARD domain; that stretch reads MAEDKHNKNP…NSTSIKAPEE (91 aa). Ser-83 bears the Phosphoserine mark. Residues His-210 and Cys-258 contribute to the active site. Residues 271–289 constitute a propeptide that is removed on maturation; sequence SPPALADSFSQSSENLEED.

It belongs to the peptidase C14A family. In terms of assembly, heterotetramer that consists of two anti-parallel arranged heterodimers, each one formed by a 20 kDa (Caspase-4 subunit p20) and a 10 kDa (Caspase-4 subunit p10) subunit. Upon direct LPS-binding, forms large homooligomers, resulting in its activation. These oligomers are often referred to as 'non-canonical inflammasomes'. In its precursor form, interacts with TMEM214; this interaction is required for association with the endoplasmic reticulum membrane. Interacts with CASP1. Interacts with NOD2. Interacts with Serpinb1a, Serpinb1b and Serpinb1c; these interactions regulate CASP4 activity. Heterotetramer that consists of two anti-parallel arranged heterodimers, each one formed by a 20 kDa (Caspase-4 subunit p20) and a 10 kDa (Caspase-4 subunit p10) subunit. In terms of processing, in response to activation signals, undergoes autoproteolytic cleavage and activation.

The protein localises to the cytoplasm. Its subcellular location is the cytosol. It localises to the endoplasmic reticulum membrane. The protein resides in the mitochondrion. It is found in the inflammasome. The protein localises to the secreted. It carries out the reaction Strict requirement for Asp at the P1 position. It has a preferred cleavage sequence of Tyr-Val-Ala-Asp-|- but also cleaves at Asp-Glu-Val-Asp-|-.. Activated by homooligomerization induced by direct binding to cytosolic LPS, in a TLR4-independent manner. In addition to LPS, CASP4/CASP11 may also be activated by oxidized phospholipid 1-palmitoyl-2-arachidonoyl- sn-glycero-3-phosphorylcholine, an oxidized phospholipid (oxPAPC), in dendritic cells, promoting adaptive immunity. The role of oxPAPC is however unclear and another report suggests that oxPAPC competes with LPS-binding and inhibits the non-canonical inflammasome in macrophages. Inflammatory caspase that acts as the effector of the non-canonical inflammasome by mediating lipopolysaccharide (LPS)-induced pyroptosis. Also indirectly activates the NLRP3 and NLRP6 inflammasomes. Acts as a thiol protease that cleaves a tetrapeptide after an Asp residue at position P1: catalyzes cleavage of CGAS, GSDMD and IL18. Effector of the non-canonical inflammasome independently of NLRP3 inflammasome and CASP1: the non-canonical inflammasome promotes pyroptosis through GSDMD cleavage without involving secretion of cytokine IL1B. In the non-canonical inflammasome, CASP4 is activated by direct binding to the lipid A moiety of LPS without the need of an upstream sensor. LPS-binding promotes CASP4 activation and CASP4-mediated cleavage of GSDMD and IL18, followed by IL18 secretion through the GSDMD pore, pyroptosis of infected cells and their extrusion into the gut lumen. Also indirectly promotes secretion of mature cytokines (IL1A and HMGB1) downstream of GSDMD-mediated pyroptosis via activation of the NLRP3 and NLRP6 inflammasomes. Involved in NLRP3-dependent CASP1 activation and IL1B secretion in response to non-canonical activators, such as UVB radiation or cholera enterotoxin. Involved in NLRP6 inflammasome-dependent activation in response to lipoteichoic acid (LTA), a cell-wall component of Gram-positive bacteria, which leads to CASP1 activation and IL1B secretion. Involved in LPS-induced IL6 secretion; this activity may not require caspase enzymatic activity. The non-canonical inflammasome is required for innate immunity to cytosolic, but not vacuolar, bacteria. Plays a crucial role in the restriction of S.typhimurium replication in colonic epithelial cells during infection. Pyroptosis limits bacterial replication, while cytokine secretion promotes the recruitment and activation of immune cells and triggers mucosal inflammation. May also act as an activator of adaptive immunity in dendritic cells, following activation by oxidized phospholipid 1-palmitoyl-2-arachidonoyl- sn-glycero-3-phosphorylcholine, an oxidized phospholipid (oxPAPC). Cleavage of GSDMD is not strictly dependent on the consensus cleavage site but depends on an exosite interface on CASP4 that recognizes and binds the Gasdermin-D, C-terminal (GSDMD-CT) part. Catalyzes cleavage and maturation of IL18; IL18 processing also depends of the exosite interface on CASP4. In contrast, it does not directly process IL1B. During non-canonical inflammasome activation, cuts CGAS and may play a role in the regulation of antiviral innate immune activation. The protein is Caspase-4 (CASP4) of Bos taurus (Bovine).